Reading from the N-terminus, the 575-residue chain is Phosphoenolpyruvate-protein phosphotransferase (575 aa).

Catalysis depends on H191, which acts as the Tele-phosphohistidine intermediate. Phosphoenolpyruvate contacts are provided by R298 and R334. Mg(2+)-binding residues include E435 and D459. Residues 458–459 (ND) and R469 each bind phosphoenolpyruvate. Catalysis depends on C506, which acts as the Proton donor.

This sequence belongs to the PEP-utilizing enzyme family. As to quaternary structure, homodimer. Requires Mg(2+) as cofactor.

Its subcellular location is the cytoplasm. The enzyme catalyses L-histidyl-[protein] + phosphoenolpyruvate = N(pros)-phospho-L-histidyl-[protein] + pyruvate. In terms of biological role, general (non sugar-specific) component of the phosphoenolpyruvate-dependent sugar phosphotransferase system (sugar PTS). This major carbohydrate active-transport system catalyzes the phosphorylation of incoming sugar substrates concomitantly with their translocation across the cell membrane. Enzyme I transfers the phosphoryl group from phosphoenolpyruvate (PEP) to the phosphoryl carrier protein (HPr). This is Phosphoenolpyruvate-protein phosphotransferase (ptsI) from Lactococcus lactis subsp. lactis (strain IL1403) (Streptococcus lactis).